Here is a 468-residue protein sequence, read N- to C-terminus: Alpha-N-acetylgalactosaminidase (468 aa).

The segment at residues 1–30 (MENTRRNFLKKVTAAGIGAAGLAVTDQAMA) is a signal peptide (tat-type signal). NAD(+) is bound by residues 62–63 (SR), D84, 133–136 (WEWH), 154–155 (EV), and N183. Substrate is bound at residue Y212. Position 243–247 (243–247 (AEAQW)) interacts with NAD(+). Substrate contacts are provided by residues R248, 260-263 (YPTH), and Y342. NAD(+) is bound at residue Y260.

It belongs to the Gfo/Idh/MocA family. Glycosyl hydrolase 109 subfamily. The cofactor is NAD(+). In terms of processing, predicted to be exported by the Tat system. The position of the signal peptide cleavage has not been experimentally proven.

The catalysed reaction is Cleavage of non-reducing alpha-(1-&gt;3)-N-acetylgalactosamine residues from human blood group A and AB mucin glycoproteins, Forssman hapten and blood group A lacto series glycolipids.. Glycosidase that has specific alpha-N-acetylgalactosaminidase activity. In Tannerella forsythia (Bacteroides forsythus), this protein is Alpha-N-acetylgalactosaminidase (nagA).